Consider the following 357-residue polypeptide: Cinnamyl alcohol dehydrogenase 7 (357 aa).

Residue cysteine 46 coordinates Zn(2+). Threonine 48 provides a ligand contact to NADP(+). Residues histidine 68, glutamate 69, cysteine 99, cysteine 102, cysteine 105, cysteine 113, and cysteine 162 each contribute to the Zn(2+) site. Residues threonine 166, 187–192 (GLGGLG), 210–215 (STSERK), threonine 250, glycine 274, and 297–299 (SMV) each bind NADP(+).

It belongs to the zinc-containing alcohol dehydrogenase family. In terms of assembly, homodimer. Zn(2+) is required as a cofactor. In terms of tissue distribution, expressed in the differentiation and elongation zones of primary and lateral roots. Expressed in the hypocotyl, cotyledon and leaf veins, hydathodes and trichomes. In stems, expressed in the vascular cambium region. Expressed in the style, anthers, stamen filaments, vascular tissues of sepals and stigmatic regions in flowers, and abscission, style and stigmatic regions of siliques and seed testa.

It catalyses the reaction (E)-cinnamyl alcohol + NADP(+) = (E)-cinnamaldehyde + NADPH + H(+). It participates in aromatic compound metabolism; phenylpropanoid biosynthesis. In terms of biological role, involved in lignin biosynthesis. Catalyzes the final step specific for the production of lignin monomers. Catalyzes the NADPH-dependent reduction of coniferaldehyde, 5-hydroxyconiferaldehyde, sinapaldehyde, 4-coumaraldehyde and caffeyl aldehyde to their respective alcohols. This Arabidopsis thaliana (Mouse-ear cress) protein is Cinnamyl alcohol dehydrogenase 7 (CAD7).